We begin with the raw amino-acid sequence, 82 residues long: MSDKIRTLQGRVTSNKMDKTITVAIERQVKHPIYGKYIKRTTKIHAHDEANQCNEGDVVAIRECRPLSKTKSWTLVEVVSKA.

It belongs to the universal ribosomal protein uS17 family. Part of the 30S ribosomal subunit.

Functionally, one of the primary rRNA binding proteins, it binds specifically to the 5'-end of 16S ribosomal RNA. The chain is Small ribosomal subunit protein uS17 from Shewanella sp. (strain MR-7).